A 192-amino-acid polypeptide reads, in one-letter code: Pyridoxal 5'-phosphate synthase subunit PdxT (192 aa).

Residue 53-55 (GES) coordinates L-glutamine. Catalysis depends on Cys-82, which acts as the Nucleophile. L-glutamine-binding positions include Arg-109 and 137–138 (IR). Active-site charge relay system residues include His-173 and Glu-175.

Belongs to the glutaminase PdxT/SNO family. As to quaternary structure, in the presence of PdxS, forms a dodecamer of heterodimers. Only shows activity in the heterodimer.

The enzyme catalyses aldehydo-D-ribose 5-phosphate + D-glyceraldehyde 3-phosphate + L-glutamine = pyridoxal 5'-phosphate + L-glutamate + phosphate + 3 H2O + H(+). It catalyses the reaction L-glutamine + H2O = L-glutamate + NH4(+). It functions in the pathway cofactor biosynthesis; pyridoxal 5'-phosphate biosynthesis. In terms of biological role, catalyzes the hydrolysis of glutamine to glutamate and ammonia as part of the biosynthesis of pyridoxal 5'-phosphate. The resulting ammonia molecule is channeled to the active site of PdxS. In Methanoculleus marisnigri (strain ATCC 35101 / DSM 1498 / JR1), this protein is Pyridoxal 5'-phosphate synthase subunit PdxT.